Reading from the N-terminus, the 392-residue chain is Succinate--CoA ligase [ADP-forming] subunit beta (392 aa).

The ATP-grasp domain occupies 9 to 248 (KGILKQFGVA…ITEEDPLEYE (240 aa)). Residues Lys50, 57-59 (GRG), Glu103, Met106, and Glu111 contribute to the ATP site. Residues Asn203 and Asp217 each contribute to the Mg(2+) site. Residues Asn268 and 325-327 (GIV) each bind substrate.

This sequence belongs to the succinate/malate CoA ligase beta subunit family. As to quaternary structure, heterotetramer of two alpha and two beta subunits. Mg(2+) serves as cofactor.

It carries out the reaction succinate + ATP + CoA = succinyl-CoA + ADP + phosphate. It catalyses the reaction GTP + succinate + CoA = succinyl-CoA + GDP + phosphate. Its pathway is carbohydrate metabolism; tricarboxylic acid cycle; succinate from succinyl-CoA (ligase route): step 1/1. In terms of biological role, succinyl-CoA synthetase functions in the citric acid cycle (TCA), coupling the hydrolysis of succinyl-CoA to the synthesis of either ATP or GTP and thus represents the only step of substrate-level phosphorylation in the TCA. The beta subunit provides nucleotide specificity of the enzyme and binds the substrate succinate, while the binding sites for coenzyme A and phosphate are found in the alpha subunit. The sequence is that of Succinate--CoA ligase [ADP-forming] subunit beta from Chlorobaculum tepidum (strain ATCC 49652 / DSM 12025 / NBRC 103806 / TLS) (Chlorobium tepidum).